The following is a 538-amino-acid chain: Calcyphosin-2 (538 aa).

The segment covering 134–146 (RNAENTKSNVTHK) has biased composition (polar residues). A disordered region spans residues 134–154 (RNAENTKSNVTHKQSPRNKID). 3 EF-hand domains span residues 426–461 (RILTGLGKYFQQLDKEGNGLLDKADFKQALKVFHLE), 462–497 (VSEKDFESAWLILNDNGNGKVDYGEFKRGIIGEMNE), and 498–533 (YRKSYVRKAFMKLDFNKSGSVPIINIRKCYCAKKHS). Positions 439, 443, 450, 477, 479, 481, 486, 511, 513, 515, 517, and 522 each coordinate Ca(2+).

In terms of tissue distribution, abundantly expressed in many tissues. Expressed in brain, colon, heart, kidney, liver, lung, liver, pancreas, placenta, skeletal muscle, testis and thymus. Highest expression in colon, testis, lung, placenta and brain.

The chain is Calcyphosin-2 from Homo sapiens (Human).